The primary structure comprises 419 residues: Glutamyl-tRNA reductase (419 aa).

Residues 49–52 (TCNR), serine 107, 112–114 (EPQ), and glutamine 118 contribute to the substrate site. Cysteine 50 functions as the Nucleophile in the catalytic mechanism. 187-192 (GAGETI) lines the NADP(+) pocket.

Belongs to the glutamyl-tRNA reductase family. In terms of assembly, homodimer.

The enzyme catalyses (S)-4-amino-5-oxopentanoate + tRNA(Glu) + NADP(+) = L-glutamyl-tRNA(Glu) + NADPH + H(+). It participates in porphyrin-containing compound metabolism; protoporphyrin-IX biosynthesis; 5-aminolevulinate from L-glutamyl-tRNA(Glu): step 1/2. Catalyzes the NADPH-dependent reduction of glutamyl-tRNA(Glu) to glutamate 1-semialdehyde (GSA). This chain is Glutamyl-tRNA reductase, found in Psychromonas ingrahamii (strain DSM 17664 / CCUG 51855 / 37).